Consider the following 98-residue polypeptide: Integration host factor subunit alpha (98 aa).

Positions 49-71 (FGNFDLRDKNQRPGRNPKTGEDI) are disordered.

This sequence belongs to the bacterial histone-like protein family. Heterodimer of an alpha and a beta chain.

In terms of biological role, this protein is one of the two subunits of integration host factor, a specific DNA-binding protein that functions in genetic recombination as well as in transcriptional and translational control. The protein is Integration host factor subunit alpha of Shewanella halifaxensis (strain HAW-EB4).